The primary structure comprises 98 residues: Large ribosomal subunit protein eL21 (98 aa).

This sequence belongs to the eukaryotic ribosomal protein eL21 family.

This chain is Large ribosomal subunit protein eL21, found in Methanocorpusculum labreanum (strain ATCC 43576 / DSM 4855 / Z).